The sequence spans 672 residues: Acetoacetyl-CoA synthetase (672 aa).

The protein belongs to the ATP-dependent AMP-binding enzyme family. As to expression, abundant in male subcutaneous white adipose tissue after weaning. In white adipose tissue, it is preferentially detected in mature adipocytes but not in preadipocytes. The expression in primary preadipocytes increases during the adipocyte differentiation. In brain, it is expressed in the midbrain, pons/medulla, cerebral cortex, hippocampus and cerebellum. The expression in the cerebellum is restricted primarily to glial cells, while in the cerebral cortex, it is restricted to neuronal cells.

It is found in the cytoplasm. The protein localises to the cytosol. It carries out the reaction acetoacetate + ATP + CoA = acetoacetyl-CoA + AMP + diphosphate. Functionally, converts acetoacetate to acetoacetyl-CoA in the cytosol. Ketone body-utilizing enzyme, responsible for the synthesis of cholesterol and fatty acids. The polypeptide is Acetoacetyl-CoA synthetase (Aacs) (Rattus norvegicus (Rat)).